Reading from the N-terminus, the 503-residue chain is ATP synthase subunit alpha (503 aa).

Residue 169–176 (GDRKTGKT) coordinates ATP.

It belongs to the ATPase alpha/beta chains family. In terms of assembly, F-type ATPases have 2 components, CF(1) - the catalytic core - and CF(0) - the membrane proton channel. CF(1) has five subunits: alpha(3), beta(3), gamma(1), delta(1), epsilon(1). CF(0) has three main subunits: a(1), b(2) and c(9-12). The alpha and beta chains form an alternating ring which encloses part of the gamma chain. CF(1) is attached to CF(0) by a central stalk formed by the gamma and epsilon chains, while a peripheral stalk is formed by the delta and b chains.

It is found in the cell membrane. The catalysed reaction is ATP + H2O + 4 H(+)(in) = ADP + phosphate + 5 H(+)(out). Functionally, produces ATP from ADP in the presence of a proton gradient across the membrane. The alpha chain is a regulatory subunit. The chain is ATP synthase subunit alpha from Ligilactobacillus salivarius (strain UCC118) (Lactobacillus salivarius).